The following is a 276-amino-acid chain: NADPH-dependent 7-cyano-7-deazaguanine reductase (276 aa).

83 to 85 provides a ligand contact to substrate; it reads IES. NADPH is bound at residue 85-86; sequence SK. Cysteine 184 acts as the Thioimide intermediate in catalysis. The Proton donor role is filled by aspartate 191. 223 to 224 contacts substrate; that stretch reads HE. 252 to 253 serves as a coordination point for NADPH; the sequence is RG.

Belongs to the GTP cyclohydrolase I family. QueF type 2 subfamily. As to quaternary structure, homodimer.

The protein resides in the cytoplasm. The catalysed reaction is 7-aminomethyl-7-carbaguanine + 2 NADP(+) = 7-cyano-7-deazaguanine + 2 NADPH + 3 H(+). Its pathway is tRNA modification; tRNA-queuosine biosynthesis. Its function is as follows. Catalyzes the NADPH-dependent reduction of 7-cyano-7-deazaguanine (preQ0) to 7-aminomethyl-7-deazaguanine (preQ1). This Pseudomonas aeruginosa (strain ATCC 15692 / DSM 22644 / CIP 104116 / JCM 14847 / LMG 12228 / 1C / PRS 101 / PAO1) protein is NADPH-dependent 7-cyano-7-deazaguanine reductase.